The sequence spans 319 residues: D-alanine--D-alanine ligase (319 aa).

The ATP-grasp domain occupies Lys120–Glu315. Residue Asp147 to Leu198 participates in ATP binding. Asp270, Glu282, and Asn284 together coordinate Mg(2+).

Belongs to the D-alanine--D-alanine ligase family. Mg(2+) is required as a cofactor. Requires Mn(2+) as cofactor.

The protein localises to the cytoplasm. It catalyses the reaction 2 D-alanine + ATP = D-alanyl-D-alanine + ADP + phosphate + H(+). It participates in cell wall biogenesis; peptidoglycan biosynthesis. Cell wall formation. The protein is D-alanine--D-alanine ligase of Thermus thermophilus (strain ATCC BAA-163 / DSM 7039 / HB27).